The following is a 306-amino-acid chain: Pantothenate kinase (306 aa).

Residue 90–97 (GSVAVGKS) coordinates ATP.

Belongs to the prokaryotic pantothenate kinase family.

Its subcellular location is the cytoplasm. The catalysed reaction is (R)-pantothenate + ATP = (R)-4'-phosphopantothenate + ADP + H(+). Its pathway is cofactor biosynthesis; coenzyme A biosynthesis; CoA from (R)-pantothenate: step 1/5. The protein is Pantothenate kinase (coaA) of Lactococcus lactis subsp. lactis (strain IL1403) (Streptococcus lactis).